We begin with the raw amino-acid sequence, 651 residues long: Acetyl-coenzyme A synthetase (651 aa).

Residues 190-193 (RRGK) and threonine 311 each bind CoA. Residues 387-389 (GEP), 411-416 (DTWWQT), aspartate 508, and arginine 523 contribute to the ATP site. Serine 531 contacts CoA. Residue arginine 534 participates in ATP binding. Residues valine 545, histidine 547, and valine 550 each coordinate Mg(2+). Residue lysine 617 is modified to N6-acetyllysine.

It belongs to the ATP-dependent AMP-binding enzyme family. Requires Mg(2+) as cofactor. In terms of processing, acetylated. Deacetylation by the SIR2-homolog deacetylase activates the enzyme.

It catalyses the reaction acetate + ATP + CoA = acetyl-CoA + AMP + diphosphate. Its function is as follows. Catalyzes the conversion of acetate into acetyl-CoA (AcCoA), an essential intermediate at the junction of anabolic and catabolic pathways. AcsA undergoes a two-step reaction. In the first half reaction, AcsA combines acetate with ATP to form acetyl-adenylate (AcAMP) intermediate. In the second half reaction, it can then transfer the acetyl group from AcAMP to the sulfhydryl group of CoA, forming the product AcCoA. M.tuberculosis may use AcsA for both acetate and propionate assimilation. This chain is Acetyl-coenzyme A synthetase, found in Mycobacterium tuberculosis (strain CDC 1551 / Oshkosh).